Consider the following 196-residue polypeptide: Transcriptional regulatory protein UhpA (196 aa).

The region spanning Thr3–Ala116 is the Response regulatory domain. Asp54 is modified (4-aspartylphosphate). One can recognise an HTH luxR-type domain in the interval Ala131–Trp196. A DNA-binding region (H-T-H motif) is located at residues Val155–Ala174.

Post-translationally, phosphorylated and dephosphorylated by UhpB.

Its subcellular location is the cytoplasm. Part of the UhpABC signaling cascade that controls the expression of the hexose phosphate transporter UhpT. Activates the transcription of the uhpT gene. Acts by binding specifically to the uhpT promoter region. The polypeptide is Transcriptional regulatory protein UhpA (uhpA) (Salmonella typhimurium (strain LT2 / SGSC1412 / ATCC 700720)).